Here is a 489-residue protein sequence, read N- to C-terminus: Rhamnulokinase (489 aa).

Residue 13-17 (ASSGR) coordinates ATP. A disulfide bond links Cys68 and Cys222. Substrate-binding positions include Gly83 and 236–238 (HDT). Asp237 (proton acceptor) is an active-site residue. An ATP-binding site is contributed by Thr259. Asn296 lines the substrate pocket. Gln304 is a binding site for ATP. Residues Cys353 and Cys370 are joined by a disulfide bond. ATP is bound at residue Gly402. Cys413 and Cys417 are disulfide-bonded.

The protein belongs to the rhamnulokinase family. Requires Mg(2+) as cofactor.

The catalysed reaction is L-rhamnulose + ATP = L-rhamnulose 1-phosphate + ADP + H(+). Its pathway is carbohydrate degradation; L-rhamnose degradation; glycerone phosphate from L-rhamnose: step 2/3. In terms of biological role, involved in the catabolism of L-rhamnose (6-deoxy-L-mannose). Catalyzes the transfer of the gamma-phosphate group from ATP to the 1-hydroxyl group of L-rhamnulose to yield L-rhamnulose 1-phosphate. The chain is Rhamnulokinase from Shigella sonnei (strain Ss046).